Consider the following 318-residue polypeptide: Nuclear egress protein 1 (318 aa).

The CCCH-type zinc-finger motif lies at 129-239 (CLRLSPFGHS…HLLLQGTSLH (111 aa)).

The protein belongs to the herpesviridae NEC1 protein family. Forms a heterodimeric viral nuclear egress complex (NEC) with NEC2. Interacts with capsid vertex specific component 2/CVC2; this interaction directs the capsid to the host inner nuclear membrane to initiate budding. Phosphorylated at serine residues in the N-terminus. This phosphorylation regulates the localization within the inner nuclear membrane.

Its subcellular location is the host nucleus inner membrane. Plays an essential role in virion nuclear egress, the first step of virion release from infected cell. Within the host nucleus, NEC1 interacts with the newly formed capsid through the vertexes and directs it to the inner nuclear membrane by associating with NEC2. Induces the budding of the capsid at the inner nuclear membrane as well as its envelopment into the perinuclear space. There, the NEC1/NEC2 complex promotes the fusion of the enveloped capsid with the outer nuclear membrane and the subsequent release of the viral capsid into the cytoplasm where it will reach the secondary budding sites in the host Golgi or trans-Golgi network. This Homo sapiens (Human) protein is Nuclear egress protein 1.